The sequence spans 286 residues: MKNANVALLQLCSGENTRDNLAQIEQQIKQLNSGIQLVMTPENALLFANAASYRHHAEQHNDGPLQQEVREMARRYGVWIQVGSMPMISRESPDLITTSSLLFDSQGELKARYDKIHMFDVDIKDIHGRYRESDTYQPGEHLTVADTPVGRLGMTVCYDLRFPGLFQALRAQGAEIISVPAAFTKVTGEAHWEILLRARAIENQCVILAAAQVGRHGATRRTWGHTMAVDAWGKIIGQNPDAVSALKVKIETTGLKTIRNQMPVLQHNRFVSSLVPRLSDSKQSSK.

In terms of domain architecture, CN hydrolase spans A4 to T252. E42 functions as the Proton acceptor in the catalytic mechanism. K115 is a catalytic residue. C157 acts as the Nucleophile in catalysis.

It belongs to the carbon-nitrogen hydrolase superfamily. NIT1/NIT2 family.

It catalyses the reaction N-(4-oxoglutaryl)-L-cysteinylglycine + H2O = L-cysteinylglycine + 2-oxoglutarate. Its function is as follows. Hydrolyzes deaminated glutathione (dGSH, 2-oxoglutaramate) to alpha-ketoglutarate (alpha-KG) and cysteinylglycine (specific activity 6.50 umol/min/mg), has less activity against alpha-ketoglutaramate (a-KGM, specific activity 0.20 umol/min/mg), very little activity on glutathione and none on L-glutamine. May function as a metabolite repair enzyme. The sequence is that of Deaminated glutathione amidase from Yersinia enterocolitica.